The following is a 93-amino-acid chain: UPF0250 protein PA3998 (93 aa).

Belongs to the UPF0250 family.

In Pseudomonas aeruginosa (strain ATCC 15692 / DSM 22644 / CIP 104116 / JCM 14847 / LMG 12228 / 1C / PRS 101 / PAO1), this protein is UPF0250 protein PA3998.